Consider the following 293-residue polypeptide: Large ribosomal RNA subunit accumulation protein YCED homolog 1, chloroplastic (293 aa).

Residues methionine 1–serine 42 constitute a chloroplast transit peptide.

Belongs to the DUF177 domain family. As to expression, highly expressed in shoots and leaves. Detected in roots, embryos and endosperm.

It is found in the plastid. It localises to the chloroplast. Plays a role in synthesis, processing and/or stability of 23S rRNA. Required for embryogenesis. May be involved in RPL23 transcript levels regulation in non-photosynthetic plastids. This is Large ribosomal RNA subunit accumulation protein YCED homolog 1, chloroplastic from Zea mays (Maize).